Here is a 94-residue protein sequence, read N- to C-terminus: Host-modulation protein 11K (94 aa).

In terms of assembly, interacts with host GRB2; this interaction alters host cell environment by modulating host signaling pathways.

The protein localises to the host cytoplasm. Enhances viral DNA replication and virion release. Mechansitically, optimizes viral DNA replication by interacting with host GRB2 to inhibit the negative effect of ERK signaling on B19 viral replication. Plays a role in viral infectivity. Induces apoptosis of primary erythroid progenitor cells. The chain is Host-modulation protein 11K (11K) from Human parvovirus B19 (strain HV) (HPV B19).